The primary structure comprises 1202 residues: Voltage-gated inwardly rectifying potassium channel KCNH6 (1202 aa).

Over 1–405 (MGSAALPHAR…YSPFKAVWDW (405 aa)) the chain is Cytoplasmic. Residues 36 to 84 (IIYCNDGFCEMFGYSRVEVMQRPCTCDFLTGPDTTKSSIAQLTQALLGS) form the PAS domain. The region spanning 87–139 (CKLEILYYRKDTSCFRCLVDVVPVKNEDGVVIMFILNFEDLAQLIAKSSGRSL) is the PAC domain. Disordered regions lie at residues 203 to 243 (ENCV…LGPR) and 285 to 315 (ERRANSEGGMGLSGKASHVKPNPPNSTSDSD). Over residues 213 to 222 (LLEKERRPSL) the composition is skewed to basic and acidic residues. Residues 406-426 (LILLLVIYTAVFTPYSAAFLL) traverse the membrane as a helical segment. Residues 427–443 (NEEQGEEKHWNCSYSCD) lie on the Extracellular side of the membrane. The N-linked (GlcNAc...) asparagine glycan is linked to N437. Residues 444–464 (PLNIIDLIVDIMFIVDIVINF) traverse the membrane as a helical segment. The Cytoplasmic portion of the chain corresponds to 465–485 (RTTYVNINDEVVSHPGKIAIH). A helical transmembrane segment spans residues 486 to 506 (YFKGWFLIDMVAAIPFDLLIF). Residues 507–515 (RSGSDETTT) lie on the Extracellular side of the membrane. The chain crosses the membrane as a helical; Voltage-sensor span at residues 516–536 (LIGLLKTARLLRLVRVARKLD). The Cytoplasmic portion of the chain corresponds to 537 to 543 (RYSEYGA). The helical transmembrane segment at 544-564 (AVLFLLMCTFALIAHWLACIW) threads the bilayer. Residues 565–608 (YAIGNVERPYMEHKIGWLDNLGDQIGKRYNDSDLSSGPSIKDKY) are Extracellular-facing. N594 is a glycosylation site (N-linked (GlcNAc...) asparagine). The pore-forming intramembrane region spans 609-629 (VTALYFTFSSLTSVGFGNVSP). Positions 621–626 (SVGFGN) match the Selectivity filter motif. Topologically, residues 630–635 (NTNSEK) are extracellular. The chain crosses the membrane as a helical span at residues 636–656 (IFSICVMLIGSLMYASIFGNV). Residues 657-1202 (SAIIQRLYSG…HLSDPVLPGS (546 aa)) lie on the Cytoplasmic side of the membrane. Positions 739–839 (AFRGASKGCL…IQREDLLEVL (101 aa)) are cNMP-binding domain. Disordered stretches follow at residues 912 to 948 (LTNPQDPLSKDQWDDVGSSTTPCSQTSDDEAKPGSPT), 1092 to 1112 (TPCAPLEDEQQTAPGQSPSYA), and 1140 to 1202 (TVYS…LPGS). Positions 928–937 (GSSTTPCSQT) are enriched in polar residues. A compositionally biased stretch (basic and acidic residues) spans 1179–1195 (EHLEASSEHQDIQRHLS).

The protein belongs to the potassium channel family. H (Eag) (TC 1.A.1.20) subfamily. Kv11.2/KCNH6 sub-subfamily. In terms of assembly, the potassium channel is probably composed of a homo- or heterotetrameric complex of pore-forming alpha subunits that can associate only within their subfamily.

It localises to the cell membrane. It carries out the reaction K(+)(in) = K(+)(out). Its function is as follows. Pore-forming (alpha) subunit of voltage-gated inwardly rectifying potassium channel. Characterized by unusual gating kinetics by producing relatively small outward currents during membrane depolarization and large inward currents during subsequent repolarization which reflect a rapid inactivation during depolarization and quick recovery from inactivation but slow deactivation (closing) during repolarization. Activates even more slowly than KCNH2. The polypeptide is Voltage-gated inwardly rectifying potassium channel KCNH6 (Gallus gallus (Chicken)).